The sequence spans 216 residues: Cyclin-U4-2 (216 aa).

The protein belongs to the cyclin family. Cyclin U/P subfamily. As to quaternary structure, interacts with CDKA-1. Expressed in roots, stems and flowers. Expressed in the shoot apex, leaf primordia and young leaves.

The polypeptide is Cyclin-U4-2 (CYCU4-2) (Arabidopsis thaliana (Mouse-ear cress)).